The sequence spans 90 residues: Acylphosphatase (90 aa).

The 87-residue stretch at Ala-3–Tyr-89 folds into the Acylphosphatase-like domain. Residues Arg-18 and Asn-36 contribute to the active site.

This sequence belongs to the acylphosphatase family.

The enzyme catalyses an acyl phosphate + H2O = a carboxylate + phosphate + H(+). The polypeptide is Acylphosphatase (acyP) (Thermotoga maritima (strain ATCC 43589 / DSM 3109 / JCM 10099 / NBRC 100826 / MSB8)).